A 168-amino-acid chain; its full sequence is MTAGTVVITGGILATVILLCIIAVLCYCRLQYYCCKKGTDGEDAEEEEEEEEHGLSIHPRVPACNACSSHVLDGRGGLAPLTSESCSQPCGVASHCTTCSPYRTPFYIRTADMVPNGGGGERLSFAPTHYKEGGTPSLKLAAPQNYPVTWPSSGHEAFTNPRAISTDV.

The chain crosses the membrane as a helical span at residues 6–26 (VVITGGILATVILLCIIAVLC).

The protein belongs to the FAM163 family.

It is found in the membrane. The chain is Protein FAM163A (Fam163a) from Mus musculus (Mouse).